We begin with the raw amino-acid sequence, 379 residues long: Cytochrome b (379 aa).

4 helical membrane passes run 33 to 53, 77 to 98, 113 to 133, and 178 to 198; these read FGSLLGICLMIQILTGLFLAM, WLIRYLHANGASMFFICLFIHV, WNIGIILFFTTMATAFVGYVL, and FFAFHFILPFIITAFVLVHLL. Positions 83 and 97 each coordinate heme b. Residues histidine 182 and histidine 196 each coordinate heme b. Histidine 201 contacts a ubiquinone. The next 4 helical transmembrane spans lie at 226–246, 288–308, 320–340, and 347–367; these read IKDLLGILLLLMALMILALFF, LGGVLALILSILILAAFPLLN, ITQTIYWTFIANLLILTWIGG, and FTMXGXIASITYFIIIIILMP.

Belongs to the cytochrome b family. The cytochrome bc1 complex contains 11 subunits: 3 respiratory subunits (MT-CYB, CYC1 and UQCRFS1), 2 core proteins (UQCRC1 and UQCRC2) and 6 low-molecular weight proteins (UQCRH/QCR6, UQCRB/QCR7, UQCRQ/QCR8, UQCR10/QCR9, UQCR11/QCR10 and a cleavage product of UQCRFS1). This cytochrome bc1 complex then forms a dimer. Heme b serves as cofactor.

The protein resides in the mitochondrion inner membrane. Functionally, component of the ubiquinol-cytochrome c reductase complex (complex III or cytochrome b-c1 complex) that is part of the mitochondrial respiratory chain. The b-c1 complex mediates electron transfer from ubiquinol to cytochrome c. Contributes to the generation of a proton gradient across the mitochondrial membrane that is then used for ATP synthesis. The protein is Cytochrome b (MT-CYB) of Necromys amoenus (Pleasant bolo mouse).